A 338-amino-acid polypeptide reads, in one-letter code: Diacylglycerol acyltransferase/mycolyltransferase Ag85A (338 aa).

The signal sequence occupies residues 1–42 (MQLVDRVRGAVTGMSRRLVVGAVGAALVSGLVGAVGGTATAG). A substrate-binding site is contributed by 85–86 (LR). A fibronectin-binding region spans residues 101–111 (FEWYDQSGLSV). A disulfide bond links Cys130 and Cys135. Positions 169 and 197 each coordinate substrate. The active-site Nucleophile is Ser169. Glu273 is an active-site residue. Substrate is bound by residues 275 to 278 (FVRT), Lys282, and 305 to 307 (HSW). The active site involves His305.

This sequence belongs to the mycobacterial A85 antigen family. As to quaternary structure, homodimer.

Its subcellular location is the secreted. It is found in the cell wall. The protein resides in the cytoplasm. The catalysed reaction is an acyl-CoA + a 1,2-diacyl-sn-glycerol = a triacyl-sn-glycerol + CoA. The enzyme catalyses 2 alpha,alpha'-trehalose 6-mycolate = alpha,alpha'-trehalose 6,6'-bismycolate + alpha,alpha-trehalose. The antigen 85 proteins (FbpA, FbpB, FbpC) are responsible for the high affinity of mycobacteria for fibronectin, a large adhesive glycoprotein, which facilitates the attachment of M.tuberculosis to murine alveolar macrophages (AMs). They also help to maintain the integrity of the cell wall by catalyzing the transfer of mycolic acids to cell wall arabinogalactan, and through the synthesis of alpha,alpha-trehalose dimycolate (TDM, cord factor). They catalyze the transfer of a mycoloyl residue from one molecule of alpha,alpha-trehalose monomycolate (TMM) to another TMM, leading to the formation of TDM. FbpA mediates triacylglycerol (TAG) formation with long-chain acyl-CoA as the acyl donor and 1,2-dipalmitoyl-sn-glycerol (1,2-dipalmitin) as the acyl acceptor. It has a preference for C26:0-CoA over C18:1-CoA. The protein is Diacylglycerol acyltransferase/mycolyltransferase Ag85A (fbpA) of Mycobacterium bovis (strain ATCC BAA-935 / AF2122/97).